Consider the following 108-residue polypeptide: UPF0060 membrane protein CC_1976 (108 aa).

4 consecutive transmembrane segments (helical) span residues 4-24, 27-47, 59-79, and 85-105; these read FAIY…FWAW, LGKS…FALL, AFAA…QVVE, and RWDL…LFGP.

It belongs to the UPF0060 family.

Its subcellular location is the cell inner membrane. The sequence is that of UPF0060 membrane protein CC_1976 from Caulobacter vibrioides (strain ATCC 19089 / CIP 103742 / CB 15) (Caulobacter crescentus).